The sequence spans 468 residues: Replication factor C large subunit (468 aa).

Residue 50–57 (GPPGSGKT) coordinates ATP. The tract at residues 422–456 (EEKAVEEKVEEEEAEEEEEEERKEEEKPKAEKKKG) is disordered. The segment covering 429-444 (KVEEEEAEEEEEEERK) has biased composition (acidic residues).

The protein belongs to the activator 1 small subunits family. RfcL subfamily. Heteromultimer composed of small subunits (RfcS) and large subunits (RfcL).

Its function is as follows. Part of the RFC clamp loader complex which loads the PCNA sliding clamp onto DNA. This Pyrococcus horikoshii (strain ATCC 700860 / DSM 12428 / JCM 9974 / NBRC 100139 / OT-3) protein is Replication factor C large subunit.